A 655-amino-acid polypeptide reads, in one-letter code: Interferon-induced GTP-binding protein Mx2 (655 aa).

The span at 1-18 shows a compositional bias: polar residues; the sequence is MVLSTEENTGVDSVNLPS. A disordered region spans residues 1 to 28; it reads MVLSTEENTGVDSVNLPSGETGLGEKDQ. Residues 60–333 form the Dynamin-type G domain; sequence DLALPAIAVI…LISHICKSLP (274 aa). Residues 70–77 are G1 motif; sequence GDQSSGKS. Position 70 to 77 (70 to 77) interacts with GTP; it reads GDQSSGKS. The interval 95–97 is G2 motif; it reads VTR. Residues 171–174 are G3 motif; sequence DLPG. Residues 171 to 175 and 240 to 243 each bind GTP; these read DLPGI and TKPD. The segment at 240 to 243 is G4 motif; sequence TKPD. Positions 272–275 are G5 motif; sequence KCRG. A disordered region spans residues 542–562; that stretch reads EAEEEKKTKHGTSSSSQSQDL. Residues 552–562 are compositionally biased toward low complexity; sequence GTSSSSQSQDL. The GED domain maps to 567–655; that stretch reads MAEIFQHLNA…ARRRLAKFPG (89 aa).

Belongs to the TRAFAC class dynamin-like GTPase superfamily. Dynamin/Fzo/YdjA family.

It is found in the cytoplasm. In terms of biological role, interferon-induced dynamin-like GTPase with antiviral activity against vesicular stomatitis virus (VSV) and Hantaan virus (HNTV). This Mus musculus (Mouse) protein is Interferon-induced GTP-binding protein Mx2 (Mx2).